A 481-amino-acid polypeptide reads, in one-letter code: Protein hedgehog (481 aa).

Positions methionine 1–serine 19 are cleaved as a signal peptide. The propeptide occupies leucine 20 to serine 90. A disordered region spans residues serine 26–histidine 56. Residue cysteine 91 is the site of N-palmitoyl cysteine attachment. Ca(2+) contacts are provided by glutamate 155, glutamate 156, aspartate 161, threonine 191, glutamate 192, aspartate 195, and aspartate 197. The Cholesterol glycine ester moiety is linked to residue glycine 264.

Belongs to the hedgehog family. Interacts with shf. In terms of processing, the C-terminal part of the hedgehog protein precursor displays an autoproteolysis activity that results in the cleavage of the full-length protein into two parts (N-product and C-product). In addition, the C-terminal part displays a cholesterol transferase activity that results by the covalent attachment of a cholesterol moiety to the C-terminal of the newly generated N-product. The N-product is the active species in both local and long-range signaling, whereas the C-product has no signaling activity. Cholesterylation is required for N-product targeting to lipid rafts and multimerization. Post-translationally, N-palmitoylation by Rasp of the hedgehog N-product, within the secretory pathway, is required for the embryonic and larval patterning activities of the hedgehog signal.

The protein resides in the nucleus. It is found in the cytoplasm. The protein localises to the cell membrane. The enzyme catalyses glycyl-L-cysteinyl-[protein] + cholesterol + H(+) = [protein]-C-terminal glycyl cholesterol ester + N-terminal L-cysteinyl-[protein]. Functionally, the C-terminal part of the hedgehog protein precursor displays an autoproteolysis activity that results in the cleavage of the full-length protein into two parts (N-product and C-product). In addition, the C-terminal part displays a cholesterol transferase activity that results by the covalent attachment of a cholesterol moiety to the C-terminal of the newly generated N-product. Once cleaved, the C-product has no signaling activity and diffuses from the cell. In terms of biological role, the dually lipidated hedgehog protein N-product is a morphogen which is essential for a variety of patterning events during development. Establishes the anterior-posterior axis of the embryonic segments and patterns the larval imaginal disks. Binds to the patched (ptc) receptor, which functions in association with smoothened (smo), to activate the transcription of target genes wingless (wg), decapentaplegic (dpp) and ptc. In the absence of hh, ptc represses the constitutive signaling activity of smo through fused (fu). Essential component of a signaling pathway which regulates the Duox-dependent gut immune response to bacterial uracil; required to activate Cad99C-dependent endosome formation, norpA-dependent Ca2+ mobilization and p38 MAPK, which are essential steps in the Duox-dependent production of reactive oxygen species (ROS) in response to intestinal bacterial infection. During photoreceptor differentiation, it up-regulates transcription of Ubr3, which in turn promotes the hh-signaling pathway by mediating the ubiquitination and degradation of cos. This is Protein hedgehog from Drosophila hydei (Fruit fly).